A 117-amino-acid polypeptide reads, in one-letter code: Large ribosomal subunit protein bL20c (117 aa).

This sequence belongs to the bacterial ribosomal protein bL20 family.

The protein resides in the plastid. The protein localises to the chloroplast. In terms of biological role, binds directly to 23S ribosomal RNA and is necessary for the in vitro assembly process of the 50S ribosomal subunit. It is not involved in the protein synthesizing functions of that subunit. This chain is Large ribosomal subunit protein bL20c, found in Calycanthus floridus var. glaucus (Eastern sweetshrub).